We begin with the raw amino-acid sequence, 595 residues long: Aspartate--tRNA(Asp/Asn) ligase (595 aa).

E175 contacts L-aspartate. The interval 199 to 202 (QQYK) is aspartate. L-aspartate is bound by residues R221 and H454. 221–223 (RDE) serves as a coordination point for ATP. E488 contacts ATP. R495 contacts L-aspartate. 540–543 (GIDR) provides a ligand contact to ATP.

It belongs to the class-II aminoacyl-tRNA synthetase family. Type 1 subfamily. In terms of assembly, homodimer.

The protein resides in the cytoplasm. It carries out the reaction tRNA(Asx) + L-aspartate + ATP = L-aspartyl-tRNA(Asx) + AMP + diphosphate. Its function is as follows. Aspartyl-tRNA synthetase with relaxed tRNA specificity since it is able to aspartylate not only its cognate tRNA(Asp) but also tRNA(Asn). Reaction proceeds in two steps: L-aspartate is first activated by ATP to form Asp-AMP and then transferred to the acceptor end of tRNA(Asp/Asn). This chain is Aspartate--tRNA(Asp/Asn) ligase, found in Sinorhizobium medicae (strain WSM419) (Ensifer medicae).